A 514-amino-acid polypeptide reads, in one-letter code: 3-octaprenyl-4-hydroxybenzoate carboxy-lyase (514 aa).

Position 177 (N177) interacts with Mn(2+). Prenylated FMN-binding positions include 180–182, 194–196, and 199–200; these read IYR, RWL, and RG. Position 243 (E243) interacts with Mn(2+). Catalysis depends on D314, which acts as the Proton donor.

This sequence belongs to the UbiD family. Homohexamer. It depends on prenylated FMN as a cofactor. Mn(2+) serves as cofactor.

It localises to the cell membrane. The catalysed reaction is a 4-hydroxy-3-(all-trans-polyprenyl)benzoate + H(+) = a 2-(all-trans-polyprenyl)phenol + CO2. It functions in the pathway cofactor biosynthesis; ubiquinone biosynthesis. In terms of biological role, catalyzes the decarboxylation of 3-octaprenyl-4-hydroxy benzoate to 2-octaprenylphenol, an intermediate step in ubiquinone biosynthesis. This chain is 3-octaprenyl-4-hydroxybenzoate carboxy-lyase, found in Bordetella pertussis (strain Tohama I / ATCC BAA-589 / NCTC 13251).